A 214-amino-acid polypeptide reads, in one-letter code: Molybdenum cofactor guanylyltransferase (214 aa).

Residues 18-20 (LAG), Lys31, Asp77, and Asp112 each bind GTP. Residue Asp112 coordinates Mg(2+).

Belongs to the MobA family. In terms of assembly, monomer. Mg(2+) is required as a cofactor.

The protein localises to the cytoplasm. The catalysed reaction is Mo-molybdopterin + GTP + H(+) = Mo-molybdopterin guanine dinucleotide + diphosphate. Functionally, transfers a GMP moiety from GTP to Mo-molybdopterin (Mo-MPT) cofactor (Moco or molybdenum cofactor) to form Mo-molybdopterin guanine dinucleotide (Mo-MGD) cofactor. This is Molybdenum cofactor guanylyltransferase from Rhodopseudomonas palustris (strain HaA2).